The sequence spans 100 residues: Pregnancy-associated protein bPAP (100 aa).

The segment at 1–40 (DSELAGPRGARGPHGLSGPHGLSGLXGPXGYTGPIGMXGL) is disordered. Low complexity predominate over residues 13 to 29 (PHGLSGPHGLSGLXGPX).

Detected at high levels in the urine of pregnant females (at protein level) and at far lower levels in the urine of nonpregnant females.

This chain is Pregnancy-associated protein bPAP, found in Bos taurus (Bovine).